A 231-amino-acid polypeptide reads, in one-letter code: Protein PIMREG (231 aa).

Positions 1–44 are disordered; the sequence is MASQWQGMRTSVRRRSLLKEEQLEKKEVTRSAGGHPETGPLGSL. Ser11 and Ser16 each carry phosphoserine. 2 short sequence motifs (D-box) span residues 14–17 and 53–56; these read RRSL and PLRA. The segment covering 17-29 has biased composition (basic and acidic residues); the sequence is LLKEEQLEKKEVT. Residue Ser72 is modified to Phosphoserine. 2 disordered regions span residues 115–138 and 152–197; these read KVRR…QKNT and HLRL…DLEP. Ser128 carries the post-translational modification Phosphoserine; by Uhmk1; in vitro. Residues 178 to 190 show a composition bias toward polar residues; that stretch reads PCSSTEPLCSPSE. Phosphoserine is present on residues Ser191 and Ser193.

Interacts with PICALM; this interaction may target PICALM to the nucleus. During mitosis, associates with HDAC2 and MTA2 subunits of the chromatin-remodeling NuRD complex; this association is strongest at prometaphase and decreases as the cell progresses through metaphase and anaphase. Post-translationally, ubiquitinated by the anaphase-promoting complex/cyclosome (APC/C) complex in the presence of FZR1, leading to its degradation by the proteasome during mitotic exit. However, degradation is not essential for normal mitotic progression within a single cell cycle. In terms of tissue distribution, mainly expressed in thymus and ovary. Expressed in all T-cell subpopulations isolated from the thymus, macrophages, pro-erythrocytes, granulocytes, mast cells and progenitor cells.

It is found in the nucleus. It localises to the nucleolus. Its function is as follows. During mitosis, may play a role in the metaphase-to-anaphase transition. In Mus musculus (Mouse), this protein is Protein PIMREG.